The chain runs to 263 residues: 3-methyl-2-oxobutanoate hydroxymethyltransferase (263 aa).

Mg(2+) contacts are provided by aspartate 44 and aspartate 83. 3-methyl-2-oxobutanoate is bound by residues 44 to 45, aspartate 83, and lysine 113; that span reads DS. Glutamate 115 is a binding site for Mg(2+). Glutamate 183 (proton acceptor) is an active-site residue.

This sequence belongs to the PanB family. As to quaternary structure, homodecamer; pentamer of dimers. Requires Mg(2+) as cofactor.

It localises to the cytoplasm. The enzyme catalyses 3-methyl-2-oxobutanoate + (6R)-5,10-methylene-5,6,7,8-tetrahydrofolate + H2O = 2-dehydropantoate + (6S)-5,6,7,8-tetrahydrofolate. Its pathway is cofactor biosynthesis; (R)-pantothenate biosynthesis; (R)-pantoate from 3-methyl-2-oxobutanoate: step 1/2. Functionally, catalyzes the reversible reaction in which hydroxymethyl group from 5,10-methylenetetrahydrofolate is transferred onto alpha-ketoisovalerate to form ketopantoate. The protein is 3-methyl-2-oxobutanoate hydroxymethyltransferase of Trichodesmium erythraeum (strain IMS101).